The sequence spans 174 residues: Small t antigen (174 aa).

Met-1 carries the post-translational modification N-acetylmethionine; by host. Residues 12-75 (QLMDLLGLER…VKYAHQPDFG (64 aa)) form the J domain. A C4-type; atypical zinc finger spans residues 103 to 116 (CAKKMSANCICLLC). The H1C3-type; atypical zinc-finger motif lies at 122-143 (HENRKLYRKDPLVWVDCYCFDC).

Interacts with host PPP2R1A; the interaction inhibits PP2A activity.

It localises to the host cytoplasm. The protein localises to the host nucleus. Promotes efficient viral genome replication by accelerating both G1 and S phase progression of the cell cycle. Inhibits host PP2A by binding to the A subunit, thereby displacing lower affinity regulatory B subunit. Inactivation of PP2A in turn results in the transactivation of cyclin A and cyclin D1 promoters. Late during the infection cycle, ST may induce dephosphorylation of host eIF4E-binding protein EIF4EBP1 leading to the inhibition of cap-dependent translation. May establish and maintain high levels of viral genomes during persistent infection in cell culture. The chain is Small t antigen from Simian virus 40 (SV40).